Reading from the N-terminus, the 167-residue chain is uncharacterized protein (167 aa).

The protein localises to the virion. This is an uncharacterized protein from Acanthamoeba polyphaga (Amoeba).